The chain runs to 214 residues: Large ribosomal subunit protein uL1 (214 aa).

It belongs to the universal ribosomal protein uL1 family. Part of the 50S ribosomal subunit.

Its function is as follows. Binds directly to 23S rRNA. Probably involved in E site tRNA release. Functionally, protein L1 is also a translational repressor protein, it controls the translation of its operon by binding to its mRNA. This Methanopyrus kandleri (strain AV19 / DSM 6324 / JCM 9639 / NBRC 100938) protein is Large ribosomal subunit protein uL1.